The chain runs to 428 residues: Glutamate-1-semialdehyde 2,1-aminomutase (428 aa).

Lys265 is modified (N6-(pyridoxal phosphate)lysine).

This sequence belongs to the class-III pyridoxal-phosphate-dependent aminotransferase family. HemL subfamily. Homodimer. Requires pyridoxal 5'-phosphate as cofactor.

Its subcellular location is the cytoplasm. It catalyses the reaction (S)-4-amino-5-oxopentanoate = 5-aminolevulinate. Its pathway is porphyrin-containing compound metabolism; protoporphyrin-IX biosynthesis; 5-aminolevulinate from L-glutamyl-tRNA(Glu): step 2/2. This chain is Glutamate-1-semialdehyde 2,1-aminomutase, found in Hamiltonella defensa subsp. Acyrthosiphon pisum (strain 5AT).